Reading from the N-terminus, the 306-residue chain is Homeobox protein HMX3 (306 aa).

Positions 95–181 (HTPRTEVPDK…DKKPCRKKKT (87 aa)) are disordered. Composition is skewed to basic and acidic residues over residues 117-143 (GERD…KSPE) and 153-174 (EEGK…PDKK). The segment at residues 178 to 237 (KKKTRTVFSRSQVFQLESTFDMKRYLSSSERAGLAASLHLTETQVKIWFQNRRNKWKRQL) is a DNA-binding region (homeobox).

This sequence belongs to the HMX homeobox family.

It is found in the nucleus. Transcription factor involved in specification of neuronal cell types and which is required for inner ear and hypothalamus development. Binds to the 5'-CAAGTG-3' core sequence. May act as a stage-specific inhibitor of anf1 in the anterior neural plate during the development. The chain is Homeobox protein HMX3 (hmx3) from Xenopus laevis (African clawed frog).